The following is a 479-amino-acid chain: ATP-dependent RNA helicase DbpA (479 aa).

The Q motif motif lies at 2-30 (SHFKNYQISHDILRALEGLGYTEPTKVQQ). In terms of domain architecture, Helicase ATP-binding spans 33 to 203 (IPAALERKDL…RQYMQNPEHI (171 aa)). ATP is bound at residue 46–53 (SQTGSGKT). The short motif at 151-154 (DEAD) is the DEAD box element. One can recognise a Helicase C-terminal domain in the interval 214 to 374 (NIEHAVIQVR…KIEAPSQEEV (161 aa)). The involved in 23S rRNA binding stretch occupies residues 404 to 479 (MKLYFNGGKK…KQLKVNKANK (76 aa)).

This sequence belongs to the DEAD box helicase family. DbpA subfamily. In terms of assembly, may interact with RNA helicases CshA and CshB.

The protein localises to the cytoplasm. The catalysed reaction is ATP + H2O = ADP + phosphate + H(+). With respect to regulation, ATPase activity is stimulated by interaction with RNA. Its function is as follows. DEAD-box RNA helicase involved in the assembly of the 50S ribosomal subunit. Has an RNA-dependent ATPase activity, which is specific for 23S rRNA, and a 3' to 5' RNA helicase activity that uses the energy of ATP hydrolysis to destabilize and unwind short rRNA duplexes. The chain is ATP-dependent RNA helicase DbpA from Bacillus subtilis (strain 168).